We begin with the raw amino-acid sequence, 525 residues long: Cyclic AMP-responsive element-binding protein 3-like protein 2 (525 aa).

The Cytoplasmic portion of the chain corresponds to 1-382 (MEIMESGDPV…SCKAAGTQTG (382 aa)). Disordered stretches follow at residues 85–104 (LCGD…DDNF), 203–267 (EALQ…QGSG), and 309–338 (NKIS…SSEN). 2 stretches are compositionally biased toward polar residues: residues 90–102 (RPQS…SSDD) and 213–239 (SSHG…QSQA). The bZIP domain occupies 299 to 362 (ALKKIRRKIK…RTLLQQLQRL (64 aa)). Positions 301–330 (KKIRRKIKNKISAQESRRKKKEYMDSLEKR) are basic motif. The segment covering 322 to 332 (EYMDSLEKRVE) has biased composition (basic and acidic residues). Residues 341–362 (LRKKVEVLESTNRTLLQQLQRL) form a leucine-zipper region. A helical; Signal-anchor for type II membrane protein membrane pass occupies residues 383–403 (TCLMMVVLCFAVIFGSFTQNL). Residues 404–525 (DMYSSSSKTI…ELDRTVNTTS (122 aa)) lie on the Lumenal side of the membrane. The S1P recognition signature appears at 433–436 (RKLL). N-linked (GlcNAc...) asparagine glycosylation is found at asparagine 490, asparagine 509, and asparagine 522.

The protein belongs to the bZIP family. ATF subfamily. Binds DNA as a dimer. In terms of processing, upon ER stress, translocated to the Golgi apparatus, where it is processed by regulated intramembrane proteolysis (RIP) to release the cytosol-facing N-terminal transcription factor domain. The cleavage is performed sequentially by site-1 and site-2 proteases (S1P/mbtps1 and S2P/mbtps2).

The protein localises to the endoplasmic reticulum membrane. Its subcellular location is the nucleus. In terms of biological role, transcription factor involved in unfolded protein response (UPR). In the absence of endoplasmic reticulum (ER) stress, inserted into ER membranes, with N-terminal DNA-binding and transcription activation domains oriented toward the cytosolic face of the membrane. In response to ER stress, transported to the Golgi, where it is cleaved in a site-specific manner by resident proteases S1P/mbtps1 and S2P/mbtps2. The released N-terminal cytosolic domain is translocated to the nucleus to effect transcription of specific target genes. Plays a critical role in chondrogenesis. May protect neuroblastoma cells from ER stress-induced death. In vitro activates transcription of target genes via direct binding to the CRE site. The sequence is that of Cyclic AMP-responsive element-binding protein 3-like protein 2 (creb3l2) from Xenopus laevis (African clawed frog).